Here is a 343-residue protein sequence, read N- to C-terminus: Glyceraldehyde-3-phosphate dehydrogenase 1 (343 aa).

NAD(+)-binding positions include 13 to 14 (RI), Asp35, Arg79, and Ser121. Residues 154–156 (SCT), Thr185, 214–215 (TG), and Arg237 contribute to the D-glyceraldehyde 3-phosphate site. Cys155 functions as the Nucleophile in the catalytic mechanism. Asn319 contributes to the NAD(+) binding site.

It belongs to the glyceraldehyde-3-phosphate dehydrogenase family. As to quaternary structure, homotetramer.

Its subcellular location is the cytoplasm. It catalyses the reaction D-glyceraldehyde 3-phosphate + phosphate + NAD(+) = (2R)-3-phospho-glyceroyl phosphate + NADH + H(+). It functions in the pathway carbohydrate degradation; glycolysis; pyruvate from D-glyceraldehyde 3-phosphate: step 1/5. Its function is as follows. Catalyzes the oxidative phosphorylation of glyceraldehyde 3-phosphate (G3P) to 1,3-bisphosphoglycerate (BPG) using the cofactor NAD. The first reaction step involves the formation of a hemiacetal intermediate between G3P and a cysteine residue, and this hemiacetal intermediate is then oxidized to a thioester, with concomitant reduction of NAD to NADH. The reduced NADH is then exchanged with the second NAD, and the thioester is attacked by a nucleophilic inorganic phosphate to produce BPG. The sequence is that of Glyceraldehyde-3-phosphate dehydrogenase 1 (gap1) from Trichormus variabilis (strain ATCC 29413 / PCC 7937) (Anabaena variabilis).